Reading from the N-terminus, the 74-residue chain is SPbeta prophage-derived uncharacterized HTH-type transcriptional regulator YopS (74 aa).

Residues 11-66 (IPELCRKKDITINELSEITGIKKQQLSDYNRLVKVDMSIRTAKRIAAALDCNVEDL) enclose the HTH cro/C1-type domain. The H-T-H motif DNA-binding region spans 22 to 41 (INELSEITGIKKQQLSDYNR).

The protein is SPbeta prophage-derived uncharacterized HTH-type transcriptional regulator YopS (yopS) of Bacillus subtilis (strain 168).